The following is a 384-amino-acid chain: 8-amino-7-oxononanoate synthase (384 aa).

R21 is a substrate binding site. 108 to 109 (GF) serves as a coordination point for pyridoxal 5'-phosphate. H133 lines the substrate pocket. The pyridoxal 5'-phosphate site is built by S179, H207, and T233. K236 carries the post-translational modification N6-(pyridoxal phosphate)lysine. Residue T352 participates in substrate binding.

It belongs to the class-II pyridoxal-phosphate-dependent aminotransferase family. BioF subfamily. Homodimer. Pyridoxal 5'-phosphate is required as a cofactor.

It carries out the reaction 6-carboxyhexanoyl-[ACP] + L-alanine + H(+) = (8S)-8-amino-7-oxononanoate + holo-[ACP] + CO2. It functions in the pathway cofactor biosynthesis; biotin biosynthesis. Catalyzes the decarboxylative condensation of pimeloyl-[acyl-carrier protein] and L-alanine to produce 8-amino-7-oxononanoate (AON), [acyl-carrier protein], and carbon dioxide. The chain is 8-amino-7-oxononanoate synthase from Citrobacter koseri (strain ATCC BAA-895 / CDC 4225-83 / SGSC4696).